We begin with the raw amino-acid sequence, 130 residues long: MYRATTRKIQVTATPRYVAERSEPDQGRHFWAYTIEVVNLGKVSVQLKSRHWVITDAHGHVEEVHGAGVVGEEPVLPPGGRFEYTSGVPLSTPTGIMSGHYDMLAETGETFSVEVPAFSLDVPHMARILN.

In terms of domain architecture, ApaG spans 3–127 (RATTRKIQVT…FSLDVPHMAR (125 aa)).

The protein is Protein ApaG of Azorhizobium caulinodans (strain ATCC 43989 / DSM 5975 / JCM 20966 / LMG 6465 / NBRC 14845 / NCIMB 13405 / ORS 571).